Reading from the N-terminus, the 748-residue chain is Subtilisin-like protease (748 aa).

Residues 1–24 form the signal peptide; the sequence is MMKMELRLLVSLIFILCSISMLAA. Residues 37-115 enclose the Inhibitor I9 domain; sequence TYIVHVKKSE…ARPERTLELH (79 aa). In terms of domain architecture, Peptidase S8 spans 122–600; that stretch reads FLGLKQGQGL…AGHVNPVKAN (479 aa). Active-site charge relay system residues include Asp-147 and His-206. In terms of domain architecture, PA spans 365 to 454; the sequence is PLVYPGSFGY…VEVSYAAGLT (90 aa). Residues Asn-376, Asn-380, and Asn-405 are each glycosylated (N-linked (GlcNAc...) asparagine). Catalysis depends on Ser-533, which acts as the Charge relay system. N-linked (GlcNAc...) asparagine glycans are attached at residues Asn-675 and Asn-722.

Belongs to the peptidase S8 family.

Its subcellular location is the secreted. It localises to the extracellular space. The protein resides in the apoplast. In terms of biological role, required for arbuscular mycorrhiza (AM) development during AM symbiosis with AM fungi (e.g. Glomeromycota intraradices). This is Subtilisin-like protease from Medicago truncatula (Barrel medic).